The following is a 142-amino-acid chain: Hemoglobin subunit alpha-B (142 aa).

In terms of domain architecture, Globin spans valine 2–arginine 142. An O2-binding site is contributed by histidine 59. Histidine 88 is a heme b binding site.

The protein belongs to the globin family. As to quaternary structure, heterotetramer of two alpha chains and two beta chains. Red blood cells.

In terms of biological role, involved in oxygen transport from the lung to the various peripheral tissues. This Otolemur crassicaudatus (Brown greater galago) protein is Hemoglobin subunit alpha-B (HBAB).